Reading from the N-terminus, the 676-residue chain is MTQAHHDDAGARNALQGGLATDPKHKARIEELAERIEKYRASYYAGHPEISDAAFDALEDELRALDPAHPVLARVGSASLITEWEKARHEIPMGSLNKVVSEDELLGWVARCDEILVKDGHGDGGTGAAPPAPGSISSVAGDLFVAEKLDGISIEVIYKGGKLVDAITRGDGEWGERITANVARMKGIPSRIREKGRLSVRGEIILRLSDMKRHFPGVTSPRNMAAGAAKRFDGQGAEHCTVLFYDVADHLEIPTCRARFAWLRELGFATPQTAHGSVEDVVKLYRRYSSELRAGLDYEIDGLVVYVDSLHVQGLLGDVNRRPRGAVAFKFASPAKVTTVVAIQWDTGPSGRVTPVAIVEPVELAGANVRRASLHNSANVRSLGIGVGDEVLVSRRNDVIPYVEEVVEKRGPVAVPPSVCPVCSAPLVVEGEYLLCRNAACRALIEGRIHNWIDAIGALEWGDKLIEQVVAAGLVREPLDLYKLTVKSIADLDRRGEKSATKCLEQLKSRLPLALPVFLAALGIEGFAIQTARLLVSAGYTTIEKLLAAGEDELAGIPGLGAIKAASIVRGLRARSDEIGRLLAAGIVPVAPEAEGPLAGLTFCFTGAGARPRGELTHLVESSGGRVLNSVTKELNYLVIADVASTSSKAVKARKYGTKLITEDDLDKLIAERRGG.

The span at 1–10 (MTQAHHDDAG) shows a compositional bias: basic and acidic residues. Residues 1–23 (MTQAHHDDAGARNALQGGLATDP) form a disordered region. NAD(+) contacts are provided by residues 52–56 (DAAFD) and 95–96 (SL). The N6-AMP-lysine intermediate role is filled by Lys148. NAD(+)-binding residues include Arg169, Glu203, and Lys330. Residues Cys420, Cys423, Cys436, and Cys441 each contribute to the Zn(2+) site. The 84-residue stretch at 593–676 (EAEGPLAGLT…DKLIAERRGG (84 aa)) folds into the BRCT domain.

The protein belongs to the NAD-dependent DNA ligase family. LigA subfamily. The cofactor is Mg(2+). Mn(2+) serves as cofactor.

The catalysed reaction is NAD(+) + (deoxyribonucleotide)n-3'-hydroxyl + 5'-phospho-(deoxyribonucleotide)m = (deoxyribonucleotide)n+m + AMP + beta-nicotinamide D-nucleotide.. Its function is as follows. DNA ligase that catalyzes the formation of phosphodiester linkages between 5'-phosphoryl and 3'-hydroxyl groups in double-stranded DNA using NAD as a coenzyme and as the energy source for the reaction. It is essential for DNA replication and repair of damaged DNA. This Sorangium cellulosum (strain So ce56) (Polyangium cellulosum (strain So ce56)) protein is DNA ligase.